A 290-amino-acid polypeptide reads, in one-letter code: Putative OX-2 membrane glycoprotein homolog (290 aa).

Positions 1-17 (MSSLMLRLLPLLYIISA) are cleaved as a signal peptide. The Extracellular portion of the chain corresponds to 18-267 (HFVLHPETSP…SDETVFTWTV (250 aa)). The Ig-like V-type domain occupies 23 to 135 (PETSPSLIYE…TFTVDNEKTS (113 aa)). C41 and C125 are oxidised to a cystine. Residues N71, N104, N194, and N202 are each glycosylated (N-linked (GlcNAc...) asparagine; by host). In terms of domain architecture, Ig-like C2-type spans 146 to 236 (PIVVLYFRYL…TNQKASALVT (91 aa)). A helical transmembrane segment spans residues 268-288 (PLILILISVIVLLISVCIVAF). Topologically, residues 289-290 (KS) are cytoplasmic.

The protein localises to the membrane. The polypeptide is Putative OX-2 membrane glycoprotein homolog (U85) (Homo sapiens (Human)).